The primary structure comprises 122 residues: Small ribosomal subunit protein uS13 (122 aa).

A disordered region spans residues arginine 93–lysine 122. Residues glutamine 101 to lysine 122 show a composition bias toward basic residues.

This sequence belongs to the universal ribosomal protein uS13 family. As to quaternary structure, part of the 30S ribosomal subunit. Forms a loose heterodimer with protein S19. Forms two bridges to the 50S subunit in the 70S ribosome.

In terms of biological role, located at the top of the head of the 30S subunit, it contacts several helices of the 16S rRNA. In the 70S ribosome it contacts the 23S rRNA (bridge B1a) and protein L5 of the 50S subunit (bridge B1b), connecting the 2 subunits; these bridges are implicated in subunit movement. Contacts the tRNAs in the A and P-sites. The protein is Small ribosomal subunit protein uS13 of Chlamydia pneumoniae (Chlamydophila pneumoniae).